Consider the following 396-residue polypeptide: Enoyl-[acyl-carrier-protein] reductase [NADH] (396 aa).

Residues 47 to 52, 73 to 74, 110 to 111, and 138 to 139 contribute to the NAD(+) site; these read GASTGF, FE, DA, and LA. Tyrosine 224 contributes to the substrate binding site. Tyrosine 234 serves as the catalytic Proton donor. Residues lysine 243 and 272–274 each bind NAD(+); that span reads LVT.

The protein belongs to the TER reductase family. In terms of assembly, monomer.

The catalysed reaction is a 2,3-saturated acyl-[ACP] + NAD(+) = a (2E)-enoyl-[ACP] + NADH + H(+). Its pathway is lipid metabolism; fatty acid biosynthesis. Functionally, involved in the final reduction of the elongation cycle of fatty acid synthesis (FAS II). Catalyzes the reduction of a carbon-carbon double bond in an enoyl moiety that is covalently linked to an acyl carrier protein (ACP). The sequence is that of Enoyl-[acyl-carrier-protein] reductase [NADH] from Flavobacterium psychrophilum (strain ATCC 49511 / DSM 21280 / CIP 103535 / JIP02/86).